A 401-amino-acid polypeptide reads, in one-letter code: Argininosuccinate synthase (401 aa).

ATP-binding positions include 10 to 18 (AYSGGLDTS) and alanine 37. Tyrosine 89 provides a ligand contact to L-citrulline. Glycine 119 is an ATP binding site. Threonine 121, asparagine 125, and aspartate 126 together coordinate L-aspartate. Asparagine 125 contacts L-citrulline. Arginine 129, serine 178, serine 187, glutamate 263, and tyrosine 275 together coordinate L-citrulline.

The protein belongs to the argininosuccinate synthase family. Type 1 subfamily. In terms of assembly, homotetramer.

The protein resides in the cytoplasm. The catalysed reaction is L-citrulline + L-aspartate + ATP = 2-(N(omega)-L-arginino)succinate + AMP + diphosphate + H(+). The protein operates within amino-acid biosynthesis; L-arginine biosynthesis; L-arginine from L-ornithine and carbamoyl phosphate: step 2/3. This Buchnera aphidicola subsp. Schizaphis graminum (strain Sg) protein is Argininosuccinate synthase.